The primary structure comprises 89 residues: Acylphosphatase (89 aa).

One can recognise an Acylphosphatase-like domain in the interval His3–Ile89. Active-site residues include Arg18 and Asn36.

This sequence belongs to the acylphosphatase family.

It carries out the reaction an acyl phosphate + H2O = a carboxylate + phosphate + H(+). The chain is Acylphosphatase (acyP) from Staphylococcus aureus (strain Mu3 / ATCC 700698).